We begin with the raw amino-acid sequence, 246 residues long: UDP-N-acetyl-D-mannosaminuronic acid transferase (246 aa).

This sequence belongs to the glycosyltransferase 26 family.

The enzyme catalyses UDP-N-acetyl-alpha-D-mannosaminouronate + N-acetyl-alpha-D-glucosaminyl-di-trans,octa-cis-undecaprenyl diphosphate = beta-D-ManNAcA-(1-&gt;4)-alpha-D-GlcNAc-di-trans,octa-cis-undecaprenyl diphosphate + UDP + H(+). The protein operates within bacterial outer membrane biogenesis; enterobacterial common antigen biosynthesis. Functionally, catalyzes the synthesis of Und-PP-GlcNAc-ManNAcA (Lipid II), the second lipid-linked intermediate involved in enterobacterial common antigen (ECA) synthesis. This chain is UDP-N-acetyl-D-mannosaminuronic acid transferase, found in Escherichia coli (strain ATCC 8739 / DSM 1576 / NBRC 3972 / NCIMB 8545 / WDCM 00012 / Crooks).